The primary structure comprises 181 residues: UPF0302 protein ABC1905 (181 aa).

It belongs to the UPF0302 family.

The chain is UPF0302 protein ABC1905 from Shouchella clausii (strain KSM-K16) (Alkalihalobacillus clausii).